Reading from the N-terminus, the 541-residue chain is MKALVENLKATARETDATDIRAAFAADPNRFSRFSTAFDDLLFDYSKCAVNDRIIDGLEALAKAAKVEEKRDAMFRGDIINITEERAVLHTALRNRSNRPVLVDGKDVMPDVNAVLEAMGKFADDIRSGALKGATGKKITDVVNIGIGGSDLGPVMATLALAPFHDGPRLHFVSNVDGAHIADTLTLLDPETSLFIVASKTFTTIETMTNAATARAFIAGKLGEAAVGHHFAAVSTALDKVGAFGIDAARVFGFWDWVGGRYSIWSAIGLPLMIAIGKENFGRFLDGGHAIDEHFRSAPLRQNIPMLLGLIGFYNRNVLGYPSRAILPYDQRLTRFPAYLQQLDMESNGKGVTLDSQPVEFSTGPVVWGEPGTNGQHAFYQLIHQGTDVIPAEFMIAANGHEKDLRHQHQLLMANCLAQSEALMKGRTLAEAKAQLTSKGMDDAKADKIAPHRVFTGNRPSLTIVYDQLDPFALGRLIALYEHRVFVEGALFNINSFDQWGVELGKELATGLLPVIEGKESAEGHDSSTAGLVAALLKAAR.

Glu-346 (proton donor) is an active-site residue. Residues His-377 and Lys-506 contribute to the active site.

It belongs to the GPI family.

It localises to the cytoplasm. The enzyme catalyses alpha-D-glucose 6-phosphate = beta-D-fructose 6-phosphate. It participates in carbohydrate biosynthesis; gluconeogenesis. It functions in the pathway carbohydrate degradation; glycolysis; D-glyceraldehyde 3-phosphate and glycerone phosphate from D-glucose: step 2/4. Its function is as follows. Catalyzes the reversible isomerization of glucose-6-phosphate to fructose-6-phosphate. This is Glucose-6-phosphate isomerase from Rhizobium meliloti (strain 1021) (Ensifer meliloti).